The chain runs to 448 residues: Probable D-serine dehydratase (448 aa).

Lys-119 carries the post-translational modification N6-(pyridoxal phosphate)lysine.

This sequence belongs to the serine/threonine dehydratase family. DsdA subfamily. It depends on pyridoxal 5'-phosphate as a cofactor.

It carries out the reaction D-serine = pyruvate + NH4(+). This Pseudomonas paraeruginosa (strain DSM 24068 / PA7) (Pseudomonas aeruginosa (strain PA7)) protein is Probable D-serine dehydratase.